Reading from the N-terminus, the 122-residue chain is MEFEFIRNTLMGEYYVKCSMGHEIVGRWLQEEIGKDPTMIAQVEALIDKAFSLPSQEHTLTGTEISLMIQGDEVLVQENALSHDYDVEMESEFDFYDAESTASCGIEDFVALIEQWKDFLNI.

The protein belongs to the UPF0231 family.

The polypeptide is UPF0231 protein VP2494 (Vibrio parahaemolyticus serotype O3:K6 (strain RIMD 2210633)).